A 398-amino-acid polypeptide reads, in one-letter code: Metal tolerance protein 1 (398 aa).

Topologically, residues Met1 to Arg56 are cytoplasmic. Residues Lys57–Ile77 traverse the membrane as a helical segment. Over Lys78–Ala89 the chain is Vacuolar. Residues His90 to Trp110 traverse the membrane as a helical segment. Residues Glu111–Arg122 are Cytoplasmic-facing. A helical transmembrane segment spans residues Ile123–Val143. The Vacuolar portion of the chain corresponds to Tyr144–Gly159. The chain crosses the membrane as a helical span at residues Phe160 to Leu180. At Gly181–Tyr263 the chain is on the cytoplasmic side. Residues His182–His232 are required for zinc-binding. Residues His186–His232 form a disordered region. Over residues Ser187 to Ser202 the composition is skewed to basic residues. Over residues His216–His232 the composition is skewed to basic and acidic residues. A helical membrane pass occupies residues Leu264–Trp284. The Vacuolar portion of the chain corresponds to Tyr285–Lys290. Residues Ile291 to Met311 traverse the membrane as a helical segment. Topologically, residues Ile312–Arg398 are cytoplasmic.

Belongs to the cation diffusion facilitator (CDF) transporter (TC 2.A.4) family. SLC30A subfamily. Ubiquitously expressed at low levels.

The protein localises to the vacuole membrane. Its function is as follows. Mediates zinc accumulation in roots and confers resistance to zinc. Involved in sequestration of excess zinc in the cytoplasm into vacuoles to maintain zinc homeostasis. Can also transport cadmium with a low efficiency. The sequence is that of Metal tolerance protein 1 from Arabidopsis thaliana (Mouse-ear cress).